Consider the following 458-residue polypeptide: MTSTPTKPTVAFAHLGCEKNRVDTEHMVGLLAEAGYGVSTDESDAAVVVVNTCSFIQDAREESVRTLVELAEQGKELIIAGCLAQHFQEELLESIPEAKAIVGTGDYQHIVDVLQRVEVGERVNRVSAVPTFVGDEHLPRQRTTDQAVAFLKVAEGCDYRCAFCIIPKLRGDQRSRPIESIVAEAHQLAAQGVQELILISQITTNYGLDLYGKPKLAELLRALGDVEIPWIRVHYAYPTGLTPDVLAAYREVPNVVPYLDLPLQHSHPEMLRAMNRPWQADVNDRLLDQIREQLPDAVLRTTLIVGFPGETEEHFQHLMGFLERQRFDHVGVFTFSPEDGTAAADLPDRVDPEVAQARKDALMALQQPISAERNSRWVGRTVDVLIEQHNPQTGEMIGRCARFAPEVDGEVRVQPGAEGQQAAPGSLVPVEITGADIYDLNGQMVGARAMVAAIRADA.

Residues 8-119 (PTVAFAHLGC…IVDVLQRVEV (112 aa)) enclose the MTTase N-terminal domain. Cys-17, Cys-53, Cys-82, Cys-157, Cys-161, and Cys-164 together coordinate [4Fe-4S] cluster. The 230-residue stretch at 143 to 372 (TTDQAVAFLK…MALQQPISAE (230 aa)) folds into the Radical SAM core domain. Residues 375-446 (SRWVGRTVDV…IYDLNGQMVG (72 aa)) form the TRAM domain.

It belongs to the methylthiotransferase family. RimO subfamily. [4Fe-4S] cluster is required as a cofactor.

Its subcellular location is the cytoplasm. It carries out the reaction L-aspartate(89)-[ribosomal protein uS12]-hydrogen + (sulfur carrier)-SH + AH2 + 2 S-adenosyl-L-methionine = 3-methylsulfanyl-L-aspartate(89)-[ribosomal protein uS12]-hydrogen + (sulfur carrier)-H + 5'-deoxyadenosine + L-methionine + A + S-adenosyl-L-homocysteine + 2 H(+). Its function is as follows. Catalyzes the methylthiolation of an aspartic acid residue of ribosomal protein uS12. The chain is Ribosomal protein uS12 methylthiotransferase RimO from Synechococcus sp. (strain CC9605).